We begin with the raw amino-acid sequence, 291 residues long: Protein/nucleic acid deglycase HchA (291 aa).

Positions 1-18 (MSNERDTSRTPTPDHAEH) are enriched in basic and acidic residues. Residues 1 to 24 (MSNERDTSRTPTPDHAEHNAFFPS) are disordered. Cysteine 188 serves as the catalytic Nucleophile.

Belongs to the peptidase C56 family. HchA subfamily.

It localises to the cytoplasm. The enzyme catalyses N(omega)-(1-hydroxy-2-oxopropyl)-L-arginyl-[protein] + H2O = lactate + L-arginyl-[protein] + H(+). It catalyses the reaction N(6)-(1-hydroxy-2-oxopropyl)-L-lysyl-[protein] + H2O = lactate + L-lysyl-[protein] + H(+). The catalysed reaction is S-(1-hydroxy-2-oxopropyl)-L-cysteinyl-[protein] + H2O = lactate + L-cysteinyl-[protein] + H(+). It carries out the reaction N(omega)-(1-hydroxy-2-oxoethyl)-L-arginyl-[protein] + H2O = L-arginyl-[protein] + glycolate + H(+). The enzyme catalyses N(6)-(1-hydroxy-2-oxoethyl)-L-lysyl-[protein] + H2O = glycolate + L-lysyl-[protein] + H(+). It catalyses the reaction S-(1-hydroxy-2-oxoethyl)-L-cysteinyl-[protein] + H2O = glycolate + L-cysteinyl-[protein] + H(+). The catalysed reaction is N(2)-(1-hydroxy-2-oxopropyl)-dGTP + H2O = lactate + dGTP + H(+). It carries out the reaction N(2)-(1-hydroxy-2-oxopropyl)-GTP + H2O = lactate + GTP + H(+). The enzyme catalyses N(2)-(1-hydroxy-2-oxopropyl)-GDP + H2O = lactate + GDP + H(+). It catalyses the reaction N(2)-(1-hydroxy-2-oxopropyl)-GMP + H2O = lactate + GMP + H(+). The catalysed reaction is N(2)-(1-hydroxy-2-oxoethyl)-dGTP + H2O = dGTP + glycolate + H(+). It carries out the reaction N(2)-(1-hydroxy-2-oxoethyl)-GTP + H2O = glycolate + GTP + H(+). The enzyme catalyses N(2)-(1-hydroxy-2-oxoethyl)-GDP + H2O = glycolate + GDP + H(+). It catalyses the reaction N(2)-(1-hydroxy-2-oxoethyl)-GMP + H2O = glycolate + GMP + H(+). The catalysed reaction is an N(2)-(1-hydroxy-2-oxopropyl)-guanosine in RNA + H2O = a guanosine in RNA + lactate + H(+). It carries out the reaction an N(2)-(1-hydroxy-2-oxopropyl)-2'-deoxyguanosine in DNA + H2O = a 2'-deoxyguanosine in DNA + lactate + H(+). The enzyme catalyses an N(2)-(1-hydroxy-2-oxoethyl)-guanosine in RNA + H2O = a guanosine in RNA + glycolate + H(+). It catalyses the reaction an N(2)-(1-hydroxy-2-oxoethyl)-2'-deoxyguanosine in DNA + H2O = a 2'-deoxyguanosine in DNA + glycolate + H(+). Protein and nucleotide deglycase that catalyzes the deglycation of the Maillard adducts formed between amino groups of proteins or nucleotides and reactive carbonyl groups of glyoxals. Thus, functions as a protein deglycase that repairs methylglyoxal- and glyoxal-glycated proteins, and releases repaired proteins and lactate or glycolate, respectively. Deglycates cysteine, arginine and lysine residues in proteins, and thus reactivates these proteins by reversing glycation by glyoxals. Acts on early glycation intermediates (hemithioacetals and aminocarbinols), preventing the formation of Schiff bases and advanced glycation endproducts (AGE). Also functions as a nucleotide deglycase able to repair glycated guanine in the free nucleotide pool (GTP, GDP, GMP, dGTP) and in DNA and RNA. Is thus involved in a major nucleotide repair system named guanine glycation repair (GG repair), dedicated to reversing methylglyoxal and glyoxal damage via nucleotide sanitization and direct nucleic acid repair. Plays an important role in protecting cells from carbonyl stress. This chain is Protein/nucleic acid deglycase HchA, found in Pseudomonas aeruginosa (strain UCBPP-PA14).